Here is a 307-residue protein sequence, read N- to C-terminus: Secondary metabolism regulator LAE1 (307 aa).

This sequence belongs to the methyltransferase superfamily. LaeA methyltransferase family. Component of the heterotrimeric velvet complex composed of LAE1, VEL1 and VEL2; VEL1 acting as a bridging protein between LAE1 and VEL2.

It is found in the nucleus. It carries out the reaction L-methionyl-[protein] + S-adenosyl-L-methionine = S-methyl-L-methionyl-[protein] + S-adenosyl-L-homocysteine. Its function is as follows. Methyltransferase that performs automethylation. No other methyl-accepting substrate has been identified yet. Component of the velvet transcription factor complex that acts as a global regulator for secondary metabolite gene expression. Controls the expression of the T-toxin gene cluster. Promotes oxidative stress tolerance and acts as a virulence factors during infection. Negatively regulate mycelial pigmentation and controls sexual development, as well as asexual development during vegetative growth. This is Secondary metabolism regulator LAE1 from Cochliobolus heterostrophus (strain C5 / ATCC 48332 / race O) (Southern corn leaf blight fungus).